A 436-amino-acid chain; its full sequence is MSRTSDDIRKHLKVRRQKQRAILAMRWRCAQGGLEFEQLDTFYGAIRPYLCVAQFFGIMPLSNIRSRDPQDVKFKVRSIGLAVTGLFLLLGGMKTLVGANILFTEGLNAKNIVGLVFLIVGMVNWLNFVGFARSWSHIMLPWSSVDILMLFPPYKRGKRSLRSKVNVLALSVVVLAVGDHMLYYASGYCSYSMHILQCHTNHSRITFGLYLEKEFSDIMFIMPFNIFSMCYGFWLNGAFTFLWNFMDIFIVMTSIGLAQRFQQFAARVGALEGRHVPEALWYDIRRDHIRLCELASLVEASMSNIVFVSCANNVYVICNQALAIFTKLRHPINYVYFWYSLIFLLARTSLVFMTASKIHDASLLPLRSLYLVPSDGWTQEVQRFADQLTSEFVGLSGYRLFCLTRKSLFGMLATLVTYELMLLQIDAKSHKGLRCA.

At 1–78 (MSRTSDDIRK…PQDVKFKVRS (78 aa)) the chain is on the cytoplasmic side. Residues 79-99 (IGLAVTGLFLLLGGMKTLVGA) traverse the membrane as a helical segment. Topologically, residues 100 to 111 (NILFTEGLNAKN) are extracellular. Residues 112 to 132 (IVGLVFLIVGMVNWLNFVGFA) form a helical membrane-spanning segment. The Cytoplasmic segment spans residues 133–164 (RSWSHIMLPWSSVDILMLFPPYKRGKRSLRSK). A helical membrane pass occupies residues 165–185 (VNVLALSVVVLAVGDHMLYYA). The Extracellular portion of the chain corresponds to 186-214 (SGYCSYSMHILQCHTNHSRITFGLYLEKE). A glycan (N-linked (GlcNAc...) asparagine) is linked at Asn-201. A helical transmembrane segment spans residues 215-235 (FSDIMFIMPFNIFSMCYGFWL). Over 236–237 (NG) the chain is Cytoplasmic. The helical transmembrane segment at 238–258 (AFTFLWNFMDIFIVMTSIGLA) threads the bilayer. Residues 259–304 (QRFQQFAARVGALEGRHVPEALWYDIRRDHIRLCELASLVEASMSN) are Extracellular-facing. Residues 305–325 (IVFVSCANNVYVICNQALAIF) traverse the membrane as a helical segment. Residues 326-334 (TKLRHPINY) lie on the Cytoplasmic side of the membrane. A helical membrane pass occupies residues 335–355 (VYFWYSLIFLLARTSLVFMTA). Topologically, residues 356 to 436 (SKIHDASLLP…AKSHKGLRCA (81 aa)) are extracellular.

The protein belongs to the insect chemoreceptor superfamily. Gustatory receptor (GR) family. Gr5a subfamily. Expressed in sweet sensing neurons of classical chemosensory sensilla, but also in two supersensitive neurons of atypical taste sensilla.

It localises to the cell membrane. One of the few identified sugar gustatory receptors identified so far with glucose being its primary ligand and which mediates acceptance behavior. This is Gustatory receptor for sugar taste 61a (Gr61a) from Drosophila melanogaster (Fruit fly).